The sequence spans 268 residues: tRNA pseudouridine synthase A (268 aa).

Asp-52 functions as the Nucleophile in the catalytic mechanism. Position 113 (Tyr-113) interacts with substrate.

The protein belongs to the tRNA pseudouridine synthase TruA family. In terms of assembly, homodimer.

The catalysed reaction is uridine(38/39/40) in tRNA = pseudouridine(38/39/40) in tRNA. Formation of pseudouridine at positions 38, 39 and 40 in the anticodon stem and loop of transfer RNAs. In Chlamydia abortus (strain DSM 27085 / S26/3) (Chlamydophila abortus), this protein is tRNA pseudouridine synthase A.